A 123-amino-acid polypeptide reads, in one-letter code: Small ribosomal subunit protein uS13 (123 aa).

The tract at residues Gly-94–Lys-123 is disordered. Positions Ala-106–Lys-123 are enriched in basic residues.

It belongs to the universal ribosomal protein uS13 family. In terms of assembly, part of the 30S ribosomal subunit. Forms a loose heterodimer with protein S19. Forms two bridges to the 50S subunit in the 70S ribosome.

Its function is as follows. Located at the top of the head of the 30S subunit, it contacts several helices of the 16S rRNA. In the 70S ribosome it contacts the 23S rRNA (bridge B1a) and protein L5 of the 50S subunit (bridge B1b), connecting the 2 subunits; these bridges are implicated in subunit movement. Contacts the tRNAs in the A and P-sites. The polypeptide is Small ribosomal subunit protein uS13 (Mycoplasmopsis agalactiae (strain NCTC 10123 / CIP 59.7 / PG2) (Mycoplasma agalactiae)).